Consider the following 30-residue polypeptide: Cycloviolacin-O10 (30 aa).

The segment at residues 1–30 (GIPCGESCVYIPCLTSAVGCSCKSKVCYRN) is a cross-link (cyclopeptide (Gly-Asn)). Intrachain disulfides connect cysteine 4–cysteine 20, cysteine 8–cysteine 22, and cysteine 13–cysteine 27.

This is a cyclic peptide. As to expression, expressed in petals and roots but not in leaves, petioles and runners (at protein level).

Functionally, probably participates in a plant defense mechanism. This Viola odorata (Sweet violet) protein is Cycloviolacin-O10.